Here is a 226-residue protein sequence, read N- to C-terminus: Ribosome maturation factor RimP (226 aa).

The tract at residues Val-190 to Asp-226 is disordered. Positions Gly-204 to Ala-215 are enriched in basic residues.

It belongs to the RimP family.

The protein localises to the cytoplasm. Required for maturation of 30S ribosomal subunits. The chain is Ribosome maturation factor RimP from Nitratidesulfovibrio vulgaris (strain DSM 19637 / Miyazaki F) (Desulfovibrio vulgaris).